Reading from the N-terminus, the 400-residue chain is S-adenosylmethionine synthase (400 aa).

Residue histidine 17 coordinates ATP. Aspartate 19 serves as a coordination point for Mg(2+). Residue glutamate 45 participates in K(+) binding. L-methionine-binding residues include glutamate 58 and glutamine 101. A flexible loop region spans residues 101 to 111 (QSPDIAMGVDQ). Residues 177–179 (DGK), 244–245 (RF), aspartate 253, 259–260 (RK), alanine 276, and lysine 280 contribute to the ATP site. Position 253 (aspartate 253) interacts with L-methionine. Residue lysine 284 coordinates L-methionine.

The protein belongs to the AdoMet synthase family. In terms of assembly, homotetramer; dimer of dimers. Requires Mg(2+) as cofactor. K(+) is required as a cofactor.

Its subcellular location is the cytoplasm. The enzyme catalyses L-methionine + ATP + H2O = S-adenosyl-L-methionine + phosphate + diphosphate. It participates in amino-acid biosynthesis; S-adenosyl-L-methionine biosynthesis; S-adenosyl-L-methionine from L-methionine: step 1/1. Catalyzes the formation of S-adenosylmethionine (AdoMet) from methionine and ATP. The overall synthetic reaction is composed of two sequential steps, AdoMet formation and the subsequent tripolyphosphate hydrolysis which occurs prior to release of AdoMet from the enzyme. In Bacillus licheniformis (strain ATCC 14580 / DSM 13 / JCM 2505 / CCUG 7422 / NBRC 12200 / NCIMB 9375 / NCTC 10341 / NRRL NRS-1264 / Gibson 46), this protein is S-adenosylmethionine synthase.